The following is a 172-amino-acid chain: Ribosome maturation factor RimM (172 aa).

The PRC barrel domain maps to 97–170 (DDEYYYDEII…LITIDVLEGL (74 aa)).

Belongs to the RimM family. As to quaternary structure, binds ribosomal protein uS19.

The protein localises to the cytoplasm. In terms of biological role, an accessory protein needed during the final step in the assembly of 30S ribosomal subunit, possibly for assembly of the head region. Essential for efficient processing of 16S rRNA. May be needed both before and after RbfA during the maturation of 16S rRNA. It has affinity for free ribosomal 30S subunits but not for 70S ribosomes. This chain is Ribosome maturation factor RimM, found in Leuconostoc citreum (strain KM20).